A 143-amino-acid polypeptide reads, in one-letter code: Large ribosomal subunit protein uL15 (143 aa).

The disordered stretch occupies residues 1 to 51; that stretch reads MELNGIKPAAGAKHAKRRVGRGIGSGIGKTAGRGHKGQKSRAGGFHKVGFE. The segment covering 21–31 has biased composition (gly residues); the sequence is RGIGSGIGKTA.

The protein belongs to the universal ribosomal protein uL15 family. Part of the 50S ribosomal subunit.

Binds to the 23S rRNA. This is Large ribosomal subunit protein uL15 from Variovorax paradoxus (strain S110).